The following is a 493-amino-acid chain: Transcript termination protein A18 (493 aa).

The Helicase ATP-binding domain maps to 100–256; sequence MIESKRPLYI…NSIINIAKLS (157 aa). ATP is bound at residue 113 to 120; that stretch reads LACGFGKT. Residues 206 to 209 carry the DESH box motif; it reads DESH.

It belongs to the helicase family. Poxviruses subfamily. Interacts with G2. Might be part of a transcription complex composed at least of G2, A18, and H5.

Its subcellular location is the virion. DNA helicase which seems to act as a postreplicative transcription termination factor. Involved in ATP-dependent release of nascent RNA. Forms a stable complex with single-stranded DNA, and to a lesser extent RNA. The protein is Transcript termination protein A18 of Rabbitpox virus (strain Utrecht) (RPV).